The sequence spans 79 residues: Exodeoxyribonuclease 7 small subunit (79 aa).

Belongs to the XseB family. Heterooligomer composed of large and small subunits.

Its subcellular location is the cytoplasm. It catalyses the reaction Exonucleolytic cleavage in either 5'- to 3'- or 3'- to 5'-direction to yield nucleoside 5'-phosphates.. Functionally, bidirectionally degrades single-stranded DNA into large acid-insoluble oligonucleotides, which are then degraded further into small acid-soluble oligonucleotides. This chain is Exodeoxyribonuclease 7 small subunit, found in Geobacillus kaustophilus (strain HTA426).